The chain runs to 364 residues: Carbamoyl phosphate synthase pyrimidine-specific small chain (364 aa).

The tract at residues 1–171 is CPSase; it reads MKRRLVLENG…AYPSPGRGKR (171 aa). 3 residues coordinate L-glutamine: S45, G219, and G221. Positions 171–356 constitute a Glutamine amidotransferase type-1 domain; that stretch reads RIVLVDFGMK…IEMIETTEKE (186 aa). C246 (nucleophile) is an active-site residue. 5 residues coordinate L-glutamine: L247, Q250, N288, G290, and Y291. Residues H329 and E331 contribute to the active site.

Belongs to the CarA family. In terms of assembly, composed of two chains; the small (or glutamine) chain promotes the hydrolysis of glutamine to ammonia, which is used by the large (or ammonia) chain to synthesize carbamoyl phosphate. Tetramer of heterodimers (alpha,beta)4. Interacts with BrxC.

The catalysed reaction is hydrogencarbonate + L-glutamine + 2 ATP + H2O = carbamoyl phosphate + L-glutamate + 2 ADP + phosphate + 2 H(+). It carries out the reaction L-glutamine + H2O = L-glutamate + NH4(+). It functions in the pathway pyrimidine metabolism; UMP biosynthesis via de novo pathway; (S)-dihydroorotate from bicarbonate: step 1/3. Its function is as follows. Small subunit of the glutamine-dependent carbamoyl phosphate synthetase (CPSase). CPSase catalyzes the formation of carbamoyl phosphate from the ammonia moiety of glutamine, carbonate, and phosphate donated by ATP, constituting the first step of the biosynthetic pathway leading to arginine and/or urea. The small subunit (glutamine amidotransferase) binds and cleaves glutamine to supply the large subunit with the substrate ammonia. The chain is Carbamoyl phosphate synthase pyrimidine-specific small chain from Bacillus subtilis (strain 168).